The chain runs to 491 residues: Protein nucleotidyltransferase YdiU (491 aa).

8 residues coordinate ATP: glycine 94, glycine 96, arginine 97, lysine 117, aspartate 129, glycine 130, arginine 180, and arginine 187. Residue aspartate 256 is the Proton acceptor of the active site. Positions 257 and 266 each coordinate Mg(2+). Aspartate 266 contacts ATP.

Belongs to the SELO family. Mg(2+) serves as cofactor. It depends on Mn(2+) as a cofactor.

The catalysed reaction is L-seryl-[protein] + ATP = 3-O-(5'-adenylyl)-L-seryl-[protein] + diphosphate. It catalyses the reaction L-threonyl-[protein] + ATP = 3-O-(5'-adenylyl)-L-threonyl-[protein] + diphosphate. It carries out the reaction L-tyrosyl-[protein] + ATP = O-(5'-adenylyl)-L-tyrosyl-[protein] + diphosphate. The enzyme catalyses L-histidyl-[protein] + UTP = N(tele)-(5'-uridylyl)-L-histidyl-[protein] + diphosphate. The catalysed reaction is L-seryl-[protein] + UTP = O-(5'-uridylyl)-L-seryl-[protein] + diphosphate. It catalyses the reaction L-tyrosyl-[protein] + UTP = O-(5'-uridylyl)-L-tyrosyl-[protein] + diphosphate. In terms of biological role, nucleotidyltransferase involved in the post-translational modification of proteins. It can catalyze the addition of adenosine monophosphate (AMP) or uridine monophosphate (UMP) to a protein, resulting in modifications known as AMPylation and UMPylation. The chain is Protein nucleotidyltransferase YdiU from Clostridium botulinum (strain 657 / Type Ba4).